The primary structure comprises 271 residues: uncharacterized protein (271 aa).

The segment at 1 to 202 (MLNSPGTRRP…APSSALSHQG (202 aa)) is disordered. The segment covering 10–23 (PVKEAQKYGEDSQK) has biased composition (basic and acidic residues). Low complexity-rich tracts occupy residues 33 to 50 (RSSVTTLSASALSDSSSP) and 59 to 73 (GRPSTPARAPATSAP). A compositionally biased stretch (polar residues) spans 92–101 (TRSSANQLPQ). The span at 121–142 (LRRRSHGDRCVPRSRRRPRPRP) shows a compositional bias: basic residues.

This is an uncharacterized protein from Homo sapiens (Human).